The chain runs to 466 residues: 3-isopropylmalate dehydratase large subunit (466 aa).

[4Fe-4S] cluster-binding residues include Cys347, Cys407, and Cys410.

It belongs to the aconitase/IPM isomerase family. LeuC type 1 subfamily. Heterodimer of LeuC and LeuD. Requires [4Fe-4S] cluster as cofactor.

The catalysed reaction is (2R,3S)-3-isopropylmalate = (2S)-2-isopropylmalate. It participates in amino-acid biosynthesis; L-leucine biosynthesis; L-leucine from 3-methyl-2-oxobutanoate: step 2/4. Its function is as follows. Catalyzes the isomerization between 2-isopropylmalate and 3-isopropylmalate, via the formation of 2-isopropylmaleate. This chain is 3-isopropylmalate dehydratase large subunit, found in Escherichia coli O127:H6 (strain E2348/69 / EPEC).